The chain runs to 89 residues: Acylphosphatase (89 aa).

The 87-residue stretch at R3–R89 folds into the Acylphosphatase-like domain. Active-site residues include R18 and N36.

It belongs to the acylphosphatase family.

It catalyses the reaction an acyl phosphate + H2O = a carboxylate + phosphate + H(+). The chain is Acylphosphatase (acyP) from Rhodococcus jostii (strain RHA1).